A 1033-amino-acid polypeptide reads, in one-letter code: Probable LRR receptor-like serine/threonine-protein kinase At1g56140 (1033 aa).

Residues 1–28 (MLRLWRYLCLLLTVWFLCNFGPVYVVRA) form the signal peptide. Over 29-636 (QNRTGATTHP…PSKGKSMTGT (608 aa)) the chain is Extracellular. N-linked (GlcNAc...) asparagine glycans are attached at residues asparagine 30, asparagine 60, and asparagine 94. LRR repeat units lie at residues 97-121 (ICRI…LWTL), 122-145 (EYLT…LGNL), 147-169 (RMRW…IGLL), 170-193 (TDLR…IGRC), 195-217 (KLQQ…FANL), 241-264 (WTKL…SFSN), 265-288 (LTSL…FIKD), 289-313 (MKSL…IGEY), 314-337 (SSLR…LFNL), 339-361 (QLTH…KGQS), 363-382 (SNVD…WVSL), 383-406 (PNLN…VLSG), and 422-445 (IYSD…VFER). The N-linked (GlcNAc...) asparagine glycan is linked to asparagine 144. A glycan (N-linked (GlcNAc...) asparagine) is linked at asparagine 181. Asparagine 264, asparagine 280, and asparagine 301 each carry an N-linked (GlcNAc...) asparagine glycan. N-linked (GlcNAc...) asparagine glycans are attached at residues asparagine 347 and asparagine 351. The N-linked (GlcNAc...) asparagine glycan is linked to asparagine 393. Asparagine 579 is a glycosylation site (N-linked (GlcNAc...) asparagine). A helical membrane pass occupies residues 637-657 (IVGVIVGVGLLSIISGVVIFI). The Cytoplasmic segment spans residues 658–1033 (IRKRRKRYTD…MLGAQMNEGR (376 aa)). Residue threonine 682 is modified to Phosphothreonine. The 259-residue stretch at 693-951 (FDPSNKLGEG…LCTQTSHALR (259 aa)) folds into the Protein kinase domain. ATP is bound by residues 699 to 707 (LGEGGFGPV) and lysine 721. Tyrosine 766 is subject to Phosphotyrosine. Aspartate 817 functions as the Proton acceptor in the catalytic mechanism. A phosphoserine mark is found at serine 821 and serine 850. Residues threonine 851 and threonine 856 each carry the phosphothreonine modification. Residue tyrosine 864 is modified to Phosphotyrosine. Residues 1012–1033 (SEISPRNNDARPMLGAQMNEGR) are disordered.

The protein belongs to the protein kinase superfamily. Ser/Thr protein kinase family.

The protein localises to the membrane. The enzyme catalyses L-seryl-[protein] + ATP = O-phospho-L-seryl-[protein] + ADP + H(+). It catalyses the reaction L-threonyl-[protein] + ATP = O-phospho-L-threonyl-[protein] + ADP + H(+). This chain is Probable LRR receptor-like serine/threonine-protein kinase At1g56140, found in Arabidopsis thaliana (Mouse-ear cress).